The primary structure comprises 198 residues: Inner membrane-spanning protein YciB (198 aa).

5 helical membrane-spanning segments follow: residues 36 to 56 (IYSA…ALFI), 67 to 87 (LTLI…SETF), 90 to 110 (WKAP…HFIG), 135 to 155 (IAWI…AFTF), and 162 to 182 (FKVF…GIYL).

Belongs to the YciB family.

Its subcellular location is the cell inner membrane. Functionally, plays a role in cell envelope biogenesis, maintenance of cell envelope integrity and membrane homeostasis. The polypeptide is Inner membrane-spanning protein YciB (Pseudomonas fluorescens (strain Pf0-1)).